A 547-amino-acid chain; its full sequence is Tripartite motif-containing protein 5 (547 aa).

Residue Ala2 is modified to N-acetylalanine. An RING-type zinc finger spans residues 15 to 59 (CPICLELLTEPLSLDCGHSFCQACITANHKESTLHQGERSCPLCR). Ser86 is subject to Phosphoserine. A B box-type zinc finger spans residues 91–132 (QKVDRCARHGEKLLLFCQQHGNVICWLCERSQEHRGHSTFLV). Zn(2+) is bound by residues Cys96, His99, Cys118, and His124. Positions 132–225 (VEEVAQKYQE…AQSENDMVLQ (94 aa)) form a coiled coil. The segment at 186–199 (FKQLRDILDCEESN) is required for interaction with GABARAP and for autophagy. In terms of domain architecture, B30.2/SPRY spans 280 to 547 (PDLKGMLQVF…LPMTLCSPSS (268 aa)).

The protein belongs to the TRIM/RBCC family. In terms of assembly, can form homodimers and homotrimers. In addition to lower-order dimerization, also exhibits a higher-order multimerization and both low- and high-order multimerizations are essential for its restriction activity. Interacts with BTBD1 and BTBD2. Interacts with PSMC4, PSMC5, PSMD7 and HSPA8/HSC70. Interacts (via B30.2/SPRY domain) with HSPA1A/B. Interacts with PSMC2, MAP3K7/TAK1, TAB2 and TAB3. Interacts with SQSTM1. Interacts with TRIM6 and TRIM34. Interacts with ULK1 (phosphorylated form), GABARAP, GABARAPL1, GABARAPL2, MAP1LC3A, MAP1LC3C and BECN1. Post-translationally, degraded in a proteasome-independent fashion in the absence of viral infection but in a proteasome-dependent fashion following exposure to restriction sensitive virus. In terms of processing, autoubiquitinated in a RING finger- and UBE2D2-dependent manner. Monoubiquitinated by TRIM21. Deubiquitinated by Yersinia YopJ. Ubiquitination may not lead to proteasomal degradation.

Its subcellular location is the cytoplasm. The protein localises to the nucleus. The enzyme catalyses S-ubiquitinyl-[E2 ubiquitin-conjugating enzyme]-L-cysteine + [acceptor protein]-L-lysine = [E2 ubiquitin-conjugating enzyme]-L-cysteine + N(6)-ubiquitinyl-[acceptor protein]-L-lysine.. The protein operates within protein modification; protein ubiquitination. Functionally, capsid-specific restriction factor that prevents infection from non-host-adapted retroviruses. Blocks viral replication early in the life cycle, after viral entry but before reverse transcription. In addition to acting as a capsid-specific restriction factor, also acts as a pattern recognition receptor that activates innate immune signaling in response to the retroviral capsid lattice. Binding to the viral capsid triggers its E3 ubiquitin ligase activity, and in concert with the heterodimeric ubiquitin conjugating enzyme complex UBE2V1-UBE2N (also known as UBC13-UEV1A complex) generates 'Lys-63'-linked polyubiquitin chains, which in turn are catalysts in the autophosphorylation of the MAP3K7/TAK1 complex (includes TAK1, TAB2, and TAB3). Activation of the MAP3K7/TAK1 complex by autophosphorylation results in the induction and expression of NF-kappa-B and MAPK-responsive inflammatory genes, thereby leading to an innate immune response in the infected cell. Plays a role in regulating autophagy through activation of autophagy regulator BECN1 by causing its dissociation from its inhibitors BCL2 and TAB2. The protein is Tripartite motif-containing protein 5 (TRIM5) of Ateles geoffroyi (Black-handed spider monkey).